Here is a 520-residue protein sequence, read N- to C-terminus: Transactivator/viroplasmin protein (520 aa).

Residues 487–520 (QDASADSGPKDGPPPTRSIVEKEDVPTTSSKQVD) form a disordered region.

This sequence belongs to the caulimoviridae viroplasmin family.

It is found in the host cytoplasm. In terms of biological role, enhances the ribosomal termination-reinitiation event leading to the translation of major open reading frames on the polycistronic viral RNAs. The sequence is that of Transactivator/viroplasmin protein from Cauliflower mosaic virus (strain CM-1841) (CaMV).